A 420-amino-acid polypeptide reads, in one-letter code: E3 ubiquitin-protein ligase pellino homolog 2 (420 aa).

Positions 15 to 202 constitute an FHA; atypical domain; it reads EPVKYGELVV…MHPRGGFTEE (188 aa).

The protein belongs to the pellino family. Interacts with TRAF6, IRAK1, IRAK4 and MAP3K7. Interacts with BCL10; this interaction is impaired by SOCS3. In terms of processing, phosphorylated by IRAK1 and IRAK4 enhancing its E3 ligase activity.

It catalyses the reaction S-ubiquitinyl-[E2 ubiquitin-conjugating enzyme]-L-cysteine + [acceptor protein]-L-lysine = [E2 ubiquitin-conjugating enzyme]-L-cysteine + N(6)-ubiquitinyl-[acceptor protein]-L-lysine.. It functions in the pathway protein modification; protein ubiquitination. Functionally, E3 ubiquitin ligase catalyzing the covalent attachment of ubiquitin moieties onto substrate proteins. Involved in the TLR and IL-1 signaling pathways via interaction with the complex containing IRAK kinases and TRAF6. Mediates IL1B-induced IRAK1 'Lys-63'-linked polyubiquitination and possibly 'Lys-48'-linked ubiquitination. May be important for LPS- and IL1B-induced MAP3K7-dependent, but not MAP3K3-dependent, NF-kappa-B activation. Can activate the MAP (mitogen activated protein) kinase pathway leading to activation of ELK1. In Homo sapiens (Human), this protein is E3 ubiquitin-protein ligase pellino homolog 2 (PELI2).